Reading from the N-terminus, the 427-residue chain is Trigger factor (427 aa).

The 86-residue stretch at 163-248 (GDTVVIDFVG…IHEVKAKEVP (86 aa)) folds into the PPIase FKBP-type domain.

Belongs to the FKBP-type PPIase family. Tig subfamily.

The protein resides in the cytoplasm. The catalysed reaction is [protein]-peptidylproline (omega=180) = [protein]-peptidylproline (omega=0). Its function is as follows. Involved in protein export. Acts as a chaperone by maintaining the newly synthesized protein in an open conformation. Functions as a peptidyl-prolyl cis-trans isomerase. The protein is Trigger factor of Streptococcus pneumoniae (strain 70585).